Reading from the N-terminus, the 228-residue chain is Probable septum site-determining protein MinC (228 aa).

It belongs to the MinC family. Interacts with MinD and FtsZ.

Functionally, cell division inhibitor that blocks the formation of polar Z ring septums. Rapidly oscillates between the poles of the cell to destabilize FtsZ filaments that have formed before they mature into polar Z rings. Prevents FtsZ polymerization. This chain is Probable septum site-determining protein MinC, found in Bacillus cereus (strain B4264).